The sequence spans 861 residues: E3 ubiquitin-protein ligase HECTD3 (861 aa).

N-acetylalanine is present on alanine 2. Phosphoserine is present on serine 12. Positions 219–397 (DEDLIHFLYD…ASLVRYPRLE (179 aa)) constitute a DOC domain. In terms of domain architecture, HECT spans 512 to 857 (YEKPLDYRWP…NCVAIDTDMS (346 aa)). Cysteine 823 acts as the Glycyl thioester intermediate in catalysis.

Interacts with TRIOBP. Interacts with STX8.

It localises to the cytoplasm. The protein localises to the perinuclear region. It carries out the reaction S-ubiquitinyl-[E2 ubiquitin-conjugating enzyme]-L-cysteine + [acceptor protein]-L-lysine = [E2 ubiquitin-conjugating enzyme]-L-cysteine + N(6)-ubiquitinyl-[acceptor protein]-L-lysine.. It participates in protein modification; protein ubiquitination. E3 ubiquitin ligases accepts ubiquitin from an E2 ubiquitin-conjugating enzyme in the form of a thioester and then directly transfers the ubiquitin to targeted substrates. Mediates ubiquitination of TRIOBP and its subsequent proteasomal degradation, thus facilitating cell cycle progression by regulating the turn-over of TRIOBP. Also mediates ubiquitination of STX8. The chain is E3 ubiquitin-protein ligase HECTD3 (Hectd3) from Mus musculus (Mouse).